The sequence spans 700 residues: Probable transcription factor FUP6 (700 aa).

Disordered stretches follow at residues Ser-343–Ser-364 and Phe-577–Gln-624. The span at Phe-577–Ser-595 shows a compositional bias: polar residues. Basic and acidic residues predominate over residues Asp-596 to Ser-607. Over residues Asn-608–Asn-623 the composition is skewed to polar residues.

It localises to the nucleus. In terms of biological role, probable transcrition factor; part of the gene cluster that mediates the biosynthesis of the mycotoxin fusaproliferin (FUP) that belongs to the class of bicyclic sesterterpenoids. The chain is Probable transcription factor FUP6 from Fusarium proliferatum (strain ET1) (Orchid endophyte fungus).